The sequence spans 114 residues: uncharacterized protein (114 aa).

This is an uncharacterized protein from Methanocaldococcus jannaschii (strain ATCC 43067 / DSM 2661 / JAL-1 / JCM 10045 / NBRC 100440) (Methanococcus jannaschii).